The following is a 137-amino-acid chain: Small ribosomal subunit protein bS6 (137 aa).

The disordered stretch occupies residues 96 to 137 (ITEASPMAKAKDERDTRRSSEERAPRAEAAEEVEESAENTAE). Positions 104-124 (KAKDERDTRRSSEERAPRAEA) are enriched in basic and acidic residues. The span at 125-137 (AEEVEESAENTAE) shows a compositional bias: acidic residues.

This sequence belongs to the bacterial ribosomal protein bS6 family.

Functionally, binds together with bS18 to 16S ribosomal RNA. In Shewanella halifaxensis (strain HAW-EB4), this protein is Small ribosomal subunit protein bS6.